A 184-amino-acid polypeptide reads, in one-letter code: ATP synthase subunit b (184 aa).

Residues 15 to 34 (VQPGLIFWTLVTFVIAAVVL) form a helical membrane-spanning segment.

Belongs to the ATPase B chain family. In terms of assembly, F-type ATPases have 2 components, F(1) - the catalytic core - and F(0) - the membrane proton channel. F(1) has five subunits: alpha(3), beta(3), gamma(1), delta(1), epsilon(1). F(0) has three main subunits: a(1), b(2) and c(10-14). The alpha and beta chains form an alternating ring which encloses part of the gamma chain. F(1) is attached to F(0) by a central stalk formed by the gamma and epsilon chains, while a peripheral stalk is formed by the delta and b chains.

Its subcellular location is the cell inner membrane. F(1)F(0) ATP synthase produces ATP from ADP in the presence of a proton or sodium gradient. F-type ATPases consist of two structural domains, F(1) containing the extramembraneous catalytic core and F(0) containing the membrane proton channel, linked together by a central stalk and a peripheral stalk. During catalysis, ATP synthesis in the catalytic domain of F(1) is coupled via a rotary mechanism of the central stalk subunits to proton translocation. Functionally, component of the F(0) channel, it forms part of the peripheral stalk, linking F(1) to F(0). The protein is ATP synthase subunit b of Myxococcus xanthus (strain DK1622).